Reading from the N-terminus, the 156-residue chain is Small ribosomal subunit protein uS7 (156 aa).

Belongs to the universal ribosomal protein uS7 family. As to quaternary structure, part of the 30S ribosomal subunit. Contacts proteins S9 and S11.

One of the primary rRNA binding proteins, it binds directly to 16S rRNA where it nucleates assembly of the head domain of the 30S subunit. Is located at the subunit interface close to the decoding center, probably blocks exit of the E-site tRNA. This is Small ribosomal subunit protein uS7 from Mycobacterium ulcerans (strain Agy99).